Reading from the N-terminus, the 372-residue chain is GDP-mannose 4,6-dehydratase (372 aa).

Residues 9–14 (GVTGQD), 64–65 (DL), 86–90 (LGAQS), and Tyr101 contribute to the NADP(+) site. Thr133 is a catalytic residue. Residues Glu135 and Tyr157 each act as nucleophile in the active site. The NADP(+) site is built by Lys161, His187, and Arg192.

This sequence belongs to the NAD(P)-dependent epimerase/dehydratase family. GDP-mannose 4,6-dehydratase subfamily. It depends on NADP(+) as a cofactor.

It catalyses the reaction GDP-alpha-D-mannose = GDP-4-dehydro-alpha-D-rhamnose + H2O. It functions in the pathway nucleotide-sugar biosynthesis; GDP-L-fucose biosynthesis via de novo pathway; GDP-L-fucose from GDP-alpha-D-mannose: step 1/2. Catalyzes the conversion of GDP-D-mannose to GDP-4-dehydro-6-deoxy-D-mannose. The protein is GDP-mannose 4,6-dehydratase of Vibrio cholerae.